We begin with the raw amino-acid sequence, 237 residues long: Tyrosine-protein kinase YwqD (237 aa).

Y228 bears the Phosphotyrosine; by autocatalysis mark.

The protein belongs to the CpsD/CapB family. Post-translationally, autophosphorylated in vitro, which inhibits ATPase activity. Dephosphorylated by YwqE in vitro.

It catalyses the reaction L-tyrosyl-[protein] + ATP = O-phospho-L-tyrosyl-[protein] + ADP + H(+). Functionally, may be involved in the regulation of capsular polysaccharide biosynthesis. Autophosphorylates in vitro. Phosphorylates and activates in vitro two UDP-glucose dehydrogenases, YwqF and TuaD, as well as the DNA-binding proteins Ssb and SsbB. The chain is Tyrosine-protein kinase YwqD (ywqD) from Bacillus subtilis (strain 168).